A 140-amino-acid polypeptide reads, in one-letter code: Profilin (140 aa).

The protein belongs to the profilin family. As to quaternary structure, occurs in many kinds of cells as a complex with monomeric actin in a 1:1 ratio.

Its function is as follows. Binds to actin and affects the structure of the cytoskeleton. At high concentrations, profilin prevents the polymerization of actin, whereas it enhances it at low concentrations. By binding to PIP2, it inhibits the formation of IP3 and DG. The protein is Profilin of Suberites domuncula (Sponge).